A 1009-amino-acid chain; its full sequence is Serine/threonine-protein phosphatase BSL2 homolog (1009 aa).

The segment at 1–48 (MDVDSRMTTESDSDSDAAAQGGGGGGFGSETSSASPSAPGTPTAMGAG) is disordered. The span at 29–45 (SETSSASPSAPGTPTAM) shows a compositional bias: low complexity. 5 Kelch repeats span residues 136-182 (SSAG…VATA), 240-288 (FLLT…TASA), 293-344 (LLLL…FVNA), 349-396 (SGGA…DAAG), and 417-463 (MIYV…IQAG). A disordered region spans residues 549–572 (QVNGEAEHSPDREQSPDATPSVKQ). Positions 553-563 (EAEHSPDREQS) are enriched in basic and acidic residues. Mn(2+) contacts are provided by aspartate 711, histidine 713, aspartate 745, and asparagine 777. Histidine 778 functions as the Proton donor in the catalytic mechanism. Mn(2+) is bound by residues histidine 830 and histidine 909. The segment at 984–1009 (NANRPPTPTRGRPQAANNDRGSLAWI) is disordered.

The protein belongs to the PPP phosphatase family. BSU subfamily. Mn(2+) serves as cofactor.

Its subcellular location is the nucleus. The enzyme catalyses O-phospho-L-seryl-[protein] + H2O = L-seryl-[protein] + phosphate. It carries out the reaction O-phospho-L-threonyl-[protein] + H2O = L-threonyl-[protein] + phosphate. This chain is Serine/threonine-protein phosphatase BSL2 homolog (BSL2), found in Oryza sativa subsp. japonica (Rice).